The following is a 292-amino-acid chain: Ventral anterior homeobox 2 (292 aa).

The span at 1–36 shows a compositional bias: basic and acidic residues; that stretch reads MGDGGAERDRGPKRREEPGGRSGRHGEHRGAEDLRA. Residues 1-74 are disordered; the sequence is MGDGGAERDR…DGQQALGETD (74 aa). A DNA-binding region (homeobox) is located at residues 102-161; it reads PKRTRTSFTAEQLYRLEMEFQRCQYVVGRERTELARQLNLSETQVKVWFQNRRTKQKKDQ. The disordered stretch occupies residues 207-242; that stretch reads LPGLPASHRGTSLVDPRNSSPRLNPMPSASASSPLP.

Belongs to the EMX homeobox family. Expressed in the developing and mature retina.

Its subcellular location is the nucleus. Its function is as follows. Transcription factor that may function in dorsoventral specification of the forebrain. Regulates the expression of Wnt signaling antagonists including the expression of a truncated TCF7L2 isoform that cannot bind CTNNB1 and acts therefore as a potent dominant-negative Wnt antagonist. Plays a crucial role in eye development and, in particular, in the specification of the ventral optic vesicle. May be a regulator of axial polarization in the retina. This Mus musculus (Mouse) protein is Ventral anterior homeobox 2 (Vax2).